The sequence spans 89 residues: MSLNAEQTASILAEFGRCENDTGSTEVQVALLTAQINHLQGHFKEHKHDHHSRRGLLRMVNTRRKLLAYLKRTENVRYQELIKKLGLRR.

It belongs to the universal ribosomal protein uS15 family. In terms of assembly, part of the 30S ribosomal subunit. Forms a bridge to the 50S subunit in the 70S ribosome, contacting the 23S rRNA.

Functionally, one of the primary rRNA binding proteins, it binds directly to 16S rRNA where it helps nucleate assembly of the platform of the 30S subunit by binding and bridging several RNA helices of the 16S rRNA. Forms an intersubunit bridge (bridge B4) with the 23S rRNA of the 50S subunit in the ribosome. The protein is Small ribosomal subunit protein uS15 of Shewanella woodyi (strain ATCC 51908 / MS32).